A 476-amino-acid chain; its full sequence is ATP synthase subunit beta (476 aa).

Residue 152–159 participates in ATP binding; it reads GGAGVGKT.

The protein belongs to the ATPase alpha/beta chains family. F-type ATPases have 2 components, CF(1) - the catalytic core - and CF(0) - the membrane proton channel. CF(1) has five subunits: alpha(3), beta(3), gamma(1), delta(1), epsilon(1). CF(0) has three main subunits: a(1), b(2) and c(9-12). The alpha and beta chains form an alternating ring which encloses part of the gamma chain. CF(1) is attached to CF(0) by a central stalk formed by the gamma and epsilon chains, while a peripheral stalk is formed by the delta and b chains.

It is found in the cell inner membrane. The catalysed reaction is ATP + H2O + 4 H(+)(in) = ADP + phosphate + 5 H(+)(out). Produces ATP from ADP in the presence of a proton gradient across the membrane. The catalytic sites are hosted primarily by the beta subunits. In Acidiphilium cryptum (strain JF-5), this protein is ATP synthase subunit beta.